The sequence spans 375 residues: MSQPKRRKLESGGGGEGGEGTEEEDGGELEVAVPRPRRTRRERDQLYYQCYSDVSVHEEMIADRVRTDAYRLGILRNWAALRGKTVLDVGAGTGILSIFCAQAGARRVYAVEASDIWQQAREVVRLNGLEDRVHVLPGPVETVELPEQVDAIVSEWMGCGLLHESMLSSVLHARTKWLKEGGLLLPASAELFVAPISDQMLELRLSFWSQMKQLYGVDMSCLESFATRCLMGHSEIVVQGLSGEDVLARPQCFARLELARAGLEQELEAGVGGRFRFSCYGSAPMHGFAIWFQVTFPGGDSEKPVVLSTSPFHPVTHWKQALLYLNEPVQVEQDTDVSGEITLLPSQDHHRHLRVLLRYKVGDQEEKTKDFAMED.

The tract at residues 1 to 36 is disordered; it reads MSQPKRRKLESGGGGEGGEGTEEEDGGELEVAVPRP. The segment covering 19–28 has biased composition (acidic residues); that stretch reads EGTEEEDGGE. Threonine 21 is modified (phosphothreonine). Residue arginine 38 is modified to Asymmetric dimethylarginine; by autocatalysis. The region spanning 44 to 374 is the SAM-dependent MTase PRMT-type domain; that stretch reads DQLYYQCYSD…EEKTKDFAME (331 aa). Histidine 57, arginine 66, glycine 90, glutamate 112, and glutamate 141 together coordinate S-adenosyl-L-methionine. Catalysis depends on residues glutamate 155 and glutamate 164.

It belongs to the class I-like SAM-binding methyltransferase superfamily. Protein arginine N-methyltransferase family. PRMT6 subfamily. Interacts with (and methylates) HIV-1 Tat, Rev and Nucleocapsid protein p7 (NC). Interacts with EPB41L3 and NCOA1. Post-translationally, automethylation enhances its stability.

It is found in the nucleus. It carries out the reaction L-arginyl-[protein] + 2 S-adenosyl-L-methionine = N(omega),N(omega)-dimethyl-L-arginyl-[protein] + 2 S-adenosyl-L-homocysteine + 2 H(+). Arginine methyltransferase that can catalyze the formation of both omega-N monomethylarginine (MMA) and asymmetrical dimethylarginine (aDMA), with a strong preference for the formation of aDMA. Preferentially methylates arginyl residues present in a glycine and arginine-rich domain and displays preference for monomethylated substrates. Specifically mediates the asymmetric dimethylation of histone H3 'Arg-2' to form H3R2me2a. H3R2me2a represents a specific tag for epigenetic transcriptional repression and is mutually exclusive with methylation on histone H3 'Lys-4' (H3K4me2 and H3K4me3). Acts as a transcriptional repressor of various genes such as HOXA2, THBS1 and TP53. Repression of TP53 blocks cellular senescence. Also methylates histone H2A and H4 'Arg-3' (H2AR3me and H4R3me, respectively). Acts as a regulator of DNA base excision during DNA repair by mediating the methylation of DNA polymerase beta (POLB), leading to the stimulation of its polymerase activity by enhancing DNA binding and processivity. Methylates HMGA1. Regulates alternative splicing events. Acts as a transcriptional coactivator of a number of steroid hormone receptors including ESR1, ESR2, PGR and NR3C1. Promotes fasting-induced transcriptional activation of the gluconeogenic program through methylation of the CRTC2 transcription coactivator. Methylates GPS2, protecting GPS2 from ubiquitination and degradation. Methylates SIRT7, inhibiting SIRT7 histone deacetylase activity and promoting mitochondria biogenesis. The protein is Protein arginine N-methyltransferase 6 (PRMT6) of Bos taurus (Bovine).